Consider the following 775-residue polypeptide: Coiled-coil domain-containing protein 33 (775 aa).

2 disordered regions span residues 1-23 and 68-87; these read MGRQ…LDPY and EANN…PTRA. Basic and acidic residues predominate over residues 7–18; that stretch reads KVPEEPQDRLDT. Residues 12–141 enclose the C2 domain; it reads PQDRLDTSLD…RAFHPYHFEL (130 aa). The segment covering 71–84 has biased composition (polar residues); that stretch reads NHSPQARTSVTSEP. 2 coiled-coil regions span residues 414–561 and 672–715; these read VEMN…ERKE and DKFS…LQEQ. The tract at residues 735–775 is disordered; sequence RSQGSTTPRQNLKDEGYPGNIERPLQTHLTPGTRDIRHHLR.

The chain is Coiled-coil domain-containing protein 33 (Ccdc33) from Rattus norvegicus (Rat).